Reading from the N-terminus, the 602-residue chain is Elongation factor 4 (602 aa).

Residues 6-188 (DRIRNFCIIA…RIVRDVPPPG (183 aa)) form the tr-type G domain. GTP is bound by residues 18-23 (DHGKST) and 135-138 (NKID).

The protein belongs to the TRAFAC class translation factor GTPase superfamily. Classic translation factor GTPase family. LepA subfamily.

The protein resides in the cell membrane. It catalyses the reaction GTP + H2O = GDP + phosphate + H(+). Its function is as follows. Required for accurate and efficient protein synthesis under certain stress conditions. May act as a fidelity factor of the translation reaction, by catalyzing a one-codon backward translocation of tRNAs on improperly translocated ribosomes. Back-translocation proceeds from a post-translocation (POST) complex to a pre-translocation (PRE) complex, thus giving elongation factor G a second chance to translocate the tRNAs correctly. Binds to ribosomes in a GTP-dependent manner. The chain is Elongation factor 4 from Desulforudis audaxviator (strain MP104C).